Consider the following 352-residue polypeptide: Probable transcription factor At1g11510 (352 aa).

Disordered stretches follow at residues 1–132 and 239–269; these read MSRR…GGEE and MKSNEKSKKSSKFESVKHELDSSLPNSKNNC. The span at 56 to 66 shows a compositional bias: acidic residues; sequence SGSDEETDSDS. 3 stretches are compositionally biased toward basic and acidic residues: residues 89 to 101, 117 to 132, and 241 to 259; these read KTSEKSGAKRSLE, VSGEEEKKKSGGGGEE, and SNEKSKKSSKFESVKHELD.

It belongs to the GeBP family.

This is Probable transcription factor At1g11510 from Arabidopsis thaliana (Mouse-ear cress).